Reading from the N-terminus, the 159-residue chain is Phosphopantetheine adenylyltransferase (159 aa).

Substrate is bound at residue Ser9. ATP-binding positions include 9–10 and His17; that span reads SF. Residues Lys41, Leu74, and Lys88 each coordinate substrate. Residues 89 to 91, Glu99, and 123 to 129 contribute to the ATP site; these read GLR and YGYISST.

The protein belongs to the bacterial CoaD family. In terms of assembly, homohexamer. Mg(2+) is required as a cofactor.

It is found in the cytoplasm. It carries out the reaction (R)-4'-phosphopantetheine + ATP + H(+) = 3'-dephospho-CoA + diphosphate. It functions in the pathway cofactor biosynthesis; coenzyme A biosynthesis; CoA from (R)-pantothenate: step 4/5. Its function is as follows. Reversibly transfers an adenylyl group from ATP to 4'-phosphopantetheine, yielding dephospho-CoA (dPCoA) and pyrophosphate. The polypeptide is Phosphopantetheine adenylyltransferase (Corynebacterium diphtheriae (strain ATCC 700971 / NCTC 13129 / Biotype gravis)).